The sequence spans 288 residues: Ribosomal protein L11 methyltransferase (288 aa).

Residues Thr134, Gly157, Asp179, and Asn224 each contribute to the S-adenosyl-L-methionine site.

This sequence belongs to the methyltransferase superfamily. PrmA family.

It is found in the cytoplasm. It carries out the reaction L-lysyl-[protein] + 3 S-adenosyl-L-methionine = N(6),N(6),N(6)-trimethyl-L-lysyl-[protein] + 3 S-adenosyl-L-homocysteine + 3 H(+). Functionally, methylates ribosomal protein L11. The protein is Ribosomal protein L11 methyltransferase of Caulobacter sp. (strain K31).